A 313-amino-acid chain; its full sequence is D-alanine--D-alanine ligase (313 aa).

One can recognise an ATP-grasp domain in the interval 104–304 (KQALVPHGIP…YSDLVEAIIA (201 aa)). An ATP-binding site is contributed by 130 to 187 (PLPRPYVLKPVNEGSSVGVAIVTAEGNYGSPISAASKGPWQEFDQLLAEPFIRGRELT). Positions 255, 271, and 273 each coordinate Mg(2+).

The protein belongs to the D-alanine--D-alanine ligase family. It depends on Mg(2+) as a cofactor. Mn(2+) is required as a cofactor.

It is found in the cytoplasm. It catalyses the reaction 2 D-alanine + ATP = D-alanyl-D-alanine + ADP + phosphate + H(+). The protein operates within cell wall biogenesis; peptidoglycan biosynthesis. Cell wall formation. This chain is D-alanine--D-alanine ligase, found in Novosphingobium aromaticivorans (strain ATCC 700278 / DSM 12444 / CCUG 56034 / CIP 105152 / NBRC 16084 / F199).